The primary structure comprises 352 residues: MQNRKIIHIDADCFYAAIEMRDDPNLRDIPMAIGGPASGRSVLSTANYAARVYGVRSAMPTSVAKRLCPALLVIPGNMNKYRLASEQMHAIFREFTDIIEPLSLDEAYLDVTNSSSFQGSATRIAEEIRSRILKEVGITVSAGVATNKFIAKVASDWDKPDGLTVVTPEKQFEFVSNVPVKFISGIGRVAQEKLASLGVFKCSDLQALDFSVLQKSFGSMSFRLSQFALGIDDRPVTVSRERKSISVEHTFSKDLLDLKECQAVLPILLTDLKKRMSGRDFESQLSKYYLKVKFDDFKQTTIEQPIKAKLSDDVFSQLLQQAYSRSRRPVRLIGVGYRLSPPELHQLNLPFV.

Residues I6 to G187 enclose the UmuC domain. Mg(2+)-binding residues include D10 and D105. E106 is an active-site residue.

It belongs to the DNA polymerase type-Y family. In terms of assembly, monomer. It depends on Mg(2+) as a cofactor.

The protein resides in the cytoplasm. The enzyme catalyses DNA(n) + a 2'-deoxyribonucleoside 5'-triphosphate = DNA(n+1) + diphosphate. In terms of biological role, poorly processive, error-prone DNA polymerase involved in untargeted mutagenesis. Copies undamaged DNA at stalled replication forks, which arise in vivo from mismatched or misaligned primer ends. These misaligned primers can be extended by PolIV. Exhibits no 3'-5' exonuclease (proofreading) activity. May be involved in translesional synthesis, in conjunction with the beta clamp from PolIII. The sequence is that of DNA polymerase IV from Marinomonas sp. (strain MWYL1).